The chain runs to 174 residues: Phytochrome-interacting ankyrin-repeat protein 2 (174 aa).

Low complexity predominate over residues 1-13 (MLQEPSAAFSLRR). The segment at 1–29 (MLQEPSAAFSLRRNSFRRRSPRSNVDDRG) is disordered. Position 15 is a phosphoserine (Ser-15). 3 ANK repeats span residues 28 to 57 (RGWN…DVNA), 65 to 94 (KGVS…NIDA), and 100 to 129 (CGWT…FLAD).

Interacts with phytochrome A (PHYA), both in Pr and Pfr forms. Binds to PIF3, a repressor of photomorphogenesis in response to phytochrome-mediated light signaling; this interaction may trigger the repression of PHYA-mediated PIF3 phosphorylation. Interacts with SIGE/SIG5 in mitochondrion. Interacts with RPS9M (via C terminus). In terms of processing, phosphorylated by PHYA. As to expression, mostly expressed in flowers, cotyledons, leaves and siliques, and, to a lower extent, in roots and stems. Also detected at low levels in seedlings grown in continuous dark or light conditions. Expressed in male and female gametophytes.

It is found in the cytoplasm. It localises to the nucleus. The protein resides in the mitochondrion. Its function is as follows. Promotes anthocyanin accumulation through interaction with PHYA, especially in response to far-red light, high light and sucrose treatment, probably by triggering A3G2XYLT/UF3GT expression. Required for gametophytes development as well as male-female gamete recognition during fertilization, possibly by regulating mitochondrial gene expression. Represses PHYA-mediated PIF3 phosphorylation. The sequence is that of Phytochrome-interacting ankyrin-repeat protein 2 from Arabidopsis thaliana (Mouse-ear cress).